A 347-amino-acid chain; its full sequence is NADH-ubiquinone oxidoreductase chain 2 (347 aa).

The next 11 helical transmembrane spans lie at 1-21, 25-45, 60-80, 89-109, 111-131, 149-169, 178-198, 201-221, 242-262, 274-294, and 323-343; these read MNPI…MIVM, HWLM…PILM, FLTQ…NLMF, IFNP…LGLS, FHFW…LILL, INLD…GWGG, IMAY…TYNP, TALN…LFML, SLIL…GFIP, DSII…YFYM, and MNFL…TPIM.

This sequence belongs to the complex I subunit 2 family. Core subunit of respiratory chain NADH dehydrogenase (Complex I) which is composed of 45 different subunits. Interacts with TMEM242.

The protein resides in the mitochondrion inner membrane. The enzyme catalyses a ubiquinone + NADH + 5 H(+)(in) = a ubiquinol + NAD(+) + 4 H(+)(out). Functionally, core subunit of the mitochondrial membrane respiratory chain NADH dehydrogenase (Complex I) which catalyzes electron transfer from NADH through the respiratory chain, using ubiquinone as an electron acceptor. Essential for the catalytic activity and assembly of complex I. In Ceratotherium simum (White rhinoceros), this protein is NADH-ubiquinone oxidoreductase chain 2.